The primary structure comprises 409 residues: tRNA (guanine-N(7)-)-methyltransferase non-catalytic subunit wuho (409 aa).

Residues 48–72 (DADSDSDEESTQQPQKPPTNGNGTA) are disordered. The span at 58 to 72 (TQQPQKPPTNGNGTA) shows a compositional bias: polar residues. WD repeat units lie at residues 72–111 (ADNV…DETN), 122–161 (MVSR…CKKP), 167–206 (GHMS…SIET), and 210–252 (GHGE…EVAR).

The protein belongs to the WD repeat TRM82 family. As to quaternary structure, forms a heterodimer with the catalytic subunit.

Its subcellular location is the nucleus. Its pathway is tRNA modification; N(7)-methylguanine-tRNA biosynthesis. Required for the formation of N(7)-methylguanine at position 46 (m7G46) in tRNA. In the complex, it is required to stabilize and induce conformational changes of the catalytic subunit. The protein is tRNA (guanine-N(7)-)-methyltransferase non-catalytic subunit wuho of Aedes aegypti (Yellowfever mosquito).